The chain runs to 377 residues: Spermidine/putrescine import ATP-binding protein PotA (377 aa).

The ABC transporter domain maps to 22–252 (VRLQNVTKRF…PANRFVADFI (231 aa)). 54–61 (GPSGCGKT) lines the ATP pocket.

The protein belongs to the ABC transporter superfamily. Spermidine/putrescine importer (TC 3.A.1.11.1) family. As to quaternary structure, the complex is composed of two ATP-binding proteins (PotA), two transmembrane proteins (PotB and PotC) and a solute-binding protein (PotD).

The protein localises to the cell membrane. The catalysed reaction is ATP + H2O + polyamine-[polyamine-binding protein]Side 1 = ADP + phosphate + polyamineSide 2 + [polyamine-binding protein]Side 1.. In terms of biological role, part of the ABC transporter complex PotABCD involved in spermidine/putrescine import. Responsible for energy coupling to the transport system. This is Spermidine/putrescine import ATP-binding protein PotA from Rubrobacter xylanophilus (strain DSM 9941 / JCM 11954 / NBRC 16129 / PRD-1).